We begin with the raw amino-acid sequence, 514 residues long: Cytochrome P450 87A3 (514 aa).

Helical transmembrane passes span 36 to 56 (ASSMAYIALLCAALAAVVALL) and 315 to 335 (LMFVLLFASFETTALALTIGV). Residue Cys463 participates in heme binding.

It belongs to the cytochrome P450 family. The cofactor is heme. As to expression, expressed in roots and coleoptiles, but not in leaves.

The protein localises to the cytoplasmic vesicle membrane. The protein is Cytochrome P450 87A3 (CYP87A3) of Oryza sativa subsp. japonica (Rice).